The primary structure comprises 605 residues: Class II receptor tyrosine kinase (605 aa).

An Ig-like C2-type domain is found at 1–67 (MWSSPGRNLE…DGESASFRVD (67 aa)). Residues 1-84 (MWSSPGRNLE…GSNSGVIAGV (84 aa)) lie on the Extracellular side of the membrane. Residues Asn-26, Asn-44, and Asn-72 are each glycosylated (N-linked (GlcNAc...) asparagine). Residues 85–105 (LITLLLLIALIIILICVFWVV) traverse the membrane as a helical segment. Over 106-605 (WRYRRRGKFD…GRPRGVAGCV (500 aa)) the chain is Cytoplasmic. Residues 209-230 (EELSPIQEKPTRRNTGLSTYSQ) form a disordered region. Residues 221-230 (RNTGLSTYSQ) are compositionally biased toward polar residues. The Protein kinase domain occupies 346 to 605 (IREVKQIGVG…GRPRGVAGCV (260 aa)). ATP-binding positions include 352–360 (IGVGQFGAV) and Lys-393. Asp-496 functions as the Proton acceptor in the catalytic mechanism. Tyr-527 carries the post-translational modification Phosphotyrosine; by autocatalysis.

The protein belongs to the protein kinase superfamily. Tyr protein kinase family. Insulin receptor subfamily. Post-translationally, phosphorylated.

The protein resides in the cell membrane. It carries out the reaction L-tyrosyl-[protein] + ATP = O-phospho-L-tyrosyl-[protein] + ADP + H(+). The sequence is that of Class II receptor tyrosine kinase (TK) from Geodia cydonium (Sponge).